Reading from the N-terminus, the 202-residue chain is Imidazoleglycerol-phosphate dehydratase (202 aa).

The protein belongs to the imidazoleglycerol-phosphate dehydratase family.

Its subcellular location is the cytoplasm. It catalyses the reaction D-erythro-1-(imidazol-4-yl)glycerol 3-phosphate = 3-(imidazol-4-yl)-2-oxopropyl phosphate + H2O. It participates in amino-acid biosynthesis; L-histidine biosynthesis; L-histidine from 5-phospho-alpha-D-ribose 1-diphosphate: step 6/9. This is Imidazoleglycerol-phosphate dehydratase from Brucella abortus (strain S19).